The chain runs to 539 residues: MRNRGVHRCIISVGSSNAAHVRRCAVSCCTLASANLARRDLTSSSAAHSNSGTFRDGRFDPYNAIIADITSSSTSSPSGAATKGRLKGWTAAIKSNICIRDHPTTCSSAMLQHFKPTFDASAVSLLRQAGTDIRYITNCDEFGMGSNNIHSVHGPVRNPASPRSESGPIWNLEEERVAGGSSGGSAAVVKAGLVRFALGSDTGGSVRLPAAYCGIVGLKPSYGLVSRWGLVSYADSLDTVGVLAKTVEDVSVVHSVLSQNDPHDPTSASQQARAAAATTVETLISALPSSNSSQPLKGLRVGVPKEYFPVELHPRVLPPFRRAVAGLEELGAQVVQITLPSTPSALSAYYIISSAEASSNLARYDGVEYGFHTPSAPGHHAYAATRTTAFGDEVRKRILLGTFALTADAYDNYFLQASRVRAQVQEDFASALRIRNASTKDDKLTARDQEGVDVILHPSAVDTAPTLAAAMQPGEPSAAEYVQDVLTVPASLAGLPALAVPAGAASDDGWPVGVTLVSQWGCDEVLLHVGKHLQTQLGT.

Residues lysine 94 and serine 181 each act as charge relay system in the active site. Catalysis depends on serine 205, which acts as the Acyl-ester intermediate.

This sequence belongs to the amidase family. GatA subfamily. Subunit of the heterotrimeric GatCAB amidotransferase (AdT) complex, composed of A, B and C subunits.

It localises to the mitochondrion. It catalyses the reaction L-glutamyl-tRNA(Gln) + L-glutamine + ATP + H2O = L-glutaminyl-tRNA(Gln) + L-glutamate + ADP + phosphate + H(+). In terms of biological role, allows the formation of correctly charged Gln-tRNA(Gln) through the transamidation of misacylated Glu-tRNA(Gln) in the mitochondria. The reaction takes place in the presence of glutamine and ATP through an activated gamma-phospho-Glu-tRNA(Gln). The sequence is that of Glutamyl-tRNA(Gln) amidotransferase subunit A, mitochondrial from Mycosarcoma maydis (Corn smut fungus).